A 140-amino-acid chain; its full sequence is Phosphatidylinositol N-acetylglucosaminyltransferase subunit GPI19 (140 aa).

The Cytoplasmic segment spans residues methionine 1 to tyrosine 12. A helical membrane pass occupies residues methionine 13 to glycine 33. Over glutamate 34–arginine 52 the chain is Lumenal. Residues tryptophan 53 to leucine 73 traverse the membrane as a helical segment. The Cytoplasmic portion of the chain corresponds to methionine 74–threonine 140.

Belongs to the GPI19 family. In terms of assembly, component of the phosphatidylinositol N-acetylglucosaminyltransferase (GPI-GlcNAc transferase) complex composed of at least GPI1, GPI2, GPI3, GPI15, GPI19 and ERI1. Interacts with GPI2.

It localises to the endoplasmic reticulum membrane. The catalysed reaction is a 1,2-diacyl-sn-glycero-3-phospho-(1D-myo-inositol) + UDP-N-acetyl-alpha-D-glucosamine = a 6-(N-acetyl-alpha-D-glucosaminyl)-1-(1,2-diacyl-sn-glycero-3-phospho)-1D-myo-inositol + UDP + H(+). Its pathway is glycolipid biosynthesis; glycosylphosphatidylinositol-anchor biosynthesis. In terms of biological role, part of the complex catalyzing the transfer of N-acetylglucosamine from UDP-N-acetylglucosamine to phosphatidylinositol, the first step of GPI biosynthesis. Involved in cell wall biosynthesis. The sequence is that of Phosphatidylinositol N-acetylglucosaminyltransferase subunit GPI19 (GPI19) from Saccharomyces cerevisiae (strain ATCC 204508 / S288c) (Baker's yeast).